A 204-amino-acid chain; its full sequence is Large ribosomal subunit protein eL15B (204 aa).

A disordered region spans residues 165–185 (TATGKKSRGINKGHKFNNTKA). Positions 169 to 185 (KKSRGINKGHKFNNTKA) are enriched in basic residues.

Belongs to the eukaryotic ribosomal protein eL15 family. Component of the large ribosomal subunit (LSU). Mature yeast ribosomes consist of a small (40S) and a large (60S) subunit. The 40S small subunit contains 1 molecule of ribosomal RNA (18S rRNA) and 33 different proteins (encoded by 57 genes). The large 60S subunit contains 3 rRNA molecules (25S, 5.8S and 5S rRNA) and 46 different proteins (encoded by 81 genes).

Its subcellular location is the cytoplasm. Component of the ribosome, a large ribonucleoprotein complex responsible for the synthesis of proteins in the cell. The small ribosomal subunit (SSU) binds messenger RNAs (mRNAs) and translates the encoded message by selecting cognate aminoacyl-transfer RNA (tRNA) molecules. The large subunit (LSU) contains the ribosomal catalytic site termed the peptidyl transferase center (PTC), which catalyzes the formation of peptide bonds, thereby polymerizing the amino acids delivered by tRNAs into a polypeptide chain. The nascent polypeptides leave the ribosome through a tunnel in the LSU and interact with protein factors that function in enzymatic processing, targeting, and the membrane insertion of nascent chains at the exit of the ribosomal tunnel. The sequence is that of Large ribosomal subunit protein eL15B from Saccharomyces cerevisiae (strain ATCC 204508 / S288c) (Baker's yeast).